The following is a 554-amino-acid chain: Hydroxylamine reductase (554 aa).

Residues C3, C6, C18, and C25 each coordinate [2Fe-2S] cluster. Residues H252, E276, C320, C408, C436, C461, E495, and K497 each coordinate hybrid [4Fe-2O-2S] cluster. The residue at position 408 (C408) is a Cysteine persulfide.

The protein belongs to the HCP family. Requires [2Fe-2S] cluster as cofactor. Hybrid [4Fe-2O-2S] cluster is required as a cofactor.

It localises to the cytoplasm. The catalysed reaction is A + NH4(+) + H2O = hydroxylamine + AH2 + H(+). Its function is as follows. Catalyzes the reduction of hydroxylamine to form NH(3) and H(2)O. The chain is Hydroxylamine reductase from Shewanella oneidensis (strain ATCC 700550 / JCM 31522 / CIP 106686 / LMG 19005 / NCIMB 14063 / MR-1).